Here is a 515-residue protein sequence, read N- to C-terminus: Aldehyde dehydrogenase tropH (515 aa).

NAD(+) is bound at residue 238-243 (GSVATG). The Proton acceptor role is filled by Glu260. The active-site Nucleophile is the Cys295.

It belongs to the aldehyde dehydrogenase family.

The enzyme catalyses an aldehyde + NAD(+) + H2O = a carboxylate + NADH + 2 H(+). Its pathway is secondary metabolite biosynthesis. Aldehyde dehydrogenase; part of the gene cluster that mediates the biosynthesis of the tropolone class of fungal maleic anhydrides. The pathway begins with the synthesis of 3-methylorcinaldehyde by the non-reducing polyketide synthase (PKS) tropA. 3-methylorcinaldehyde is the substrate for the FAD-dependent monooxygenase tropB to yield a dearomatized hydroxycyclohexadione. The 2-oxoglutarate-dependent dioxygenase tropC then performs the oxidative ring expansion to provide the first tropolone metabolite stipitaldehyde. Trop D converts stipitaldehyde into stipitacetal which is in turn converted to stipitalide by the short-chain dehydrogenase/reductase tropE. The next steps involve tropF, tropG, tropH, tropI and tropJ to form successive tropolone maleic anhydrides including stipitaldehydic, stipitatonic and stipitatic acids. The sequence is that of Aldehyde dehydrogenase tropH from Talaromyces stipitatus (strain ATCC 10500 / CBS 375.48 / QM 6759 / NRRL 1006) (Penicillium stipitatum).